The primary structure comprises 270 residues: MLLGSVPQLDRVAIHLGPFPVYWYGIIIGTGVLLGLWLATREGERLGIPKDTFVDLVLFAVPIAIICARAYYVAFEWEYYMQNPIQIINTRQGGLAIHGGLIGAVMTGIIYAKVKRISFWKLADIAAPSILLGQAIGRWGNFMNQEAHGGEVTRQFLEGLHLPDFIVNQMYIDGVYYHPTFLYESLWSFAGVILLLLLRKANLRRGELFFTYLIWYSIGRFFVEELRTDSLMLGPLRIAQVMSIGLIVISIIFIIVRRKTGQADKRYLEK.

Transmembrane regions (helical) follow at residues 19-39 (FPVY…LWLA), 53-73 (FVDL…AYYV), 92-112 (QGGL…IIYA), and 117-137 (ISFW…QAIG). A 1,2-diacyl-sn-glycero-3-phospho-(1'-sn-glycerol) is bound at residue Arg138. A run of 3 helical transmembrane segments spans residues 178–198 (HPTF…LLLL), 206–226 (GELF…VEEL), and 236–256 (LRIA…FIIV).

The protein belongs to the Lgt family.

The protein localises to the cell membrane. It catalyses the reaction L-cysteinyl-[prolipoprotein] + a 1,2-diacyl-sn-glycero-3-phospho-(1'-sn-glycerol) = an S-1,2-diacyl-sn-glyceryl-L-cysteinyl-[prolipoprotein] + sn-glycerol 1-phosphate + H(+). Its pathway is protein modification; lipoprotein biosynthesis (diacylglyceryl transfer). Catalyzes the transfer of the diacylglyceryl group from phosphatidylglycerol to the sulfhydryl group of the N-terminal cysteine of a prolipoprotein, the first step in the formation of mature lipoproteins. This is Phosphatidylglycerol--prolipoprotein diacylglyceryl transferase from Bacillus cytotoxicus (strain DSM 22905 / CIP 110041 / 391-98 / NVH 391-98).